Consider the following 463-residue polypeptide: Trigger factor (463 aa).

Residues Gly-162–Pro-243 enclose the PPIase FKBP-type domain. Residues Ser-427–Val-444 are compositionally biased toward polar residues. Positions Ser-427 to Lys-463 are disordered.

It belongs to the FKBP-type PPIase family. Tig subfamily.

The protein resides in the cytoplasm. It catalyses the reaction [protein]-peptidylproline (omega=180) = [protein]-peptidylproline (omega=0). In terms of biological role, involved in protein export. Acts as a chaperone by maintaining the newly synthesized protein in an open conformation. Functions as a peptidyl-prolyl cis-trans isomerase. The polypeptide is Trigger factor (Thermobifida fusca (strain YX)).